A 61-amino-acid polypeptide reads, in one-letter code: Metallothionein-1B (61 aa).

A beta region spans residues 1 to 29 (MDPNCSCPTSGSCSCAGSCTCKACRCPSC). Cys-5, Cys-7, Cys-13, Cys-15, Cys-19, Cys-21, Cys-24, Cys-26, Cys-29, Cys-33, Cys-34, Cys-36, Cys-37, Cys-41, Cys-44, Cys-48, Cys-50, Cys-57, Cys-59, and Cys-60 together coordinate a divalent metal cation. Positions 30-61 (KKSCCSCCPVGCAKCAQGCVCKGASDKCSCCA) are alpha.

Belongs to the metallothionein superfamily. Type 1 family.

In terms of biological role, metallothioneins have a high content of cysteine residues that bind various heavy metals; these proteins are transcriptionally regulated by both heavy metals and glucocorticoids. This Ovis aries (Sheep) protein is Metallothionein-1B (MT1B).